Reading from the N-terminus, the 398-residue chain is Tryptophan synthase beta chain (398 aa).

K87 carries the post-translational modification N6-(pyridoxal phosphate)lysine.

It belongs to the TrpB family. As to quaternary structure, tetramer of two alpha and two beta chains. Pyridoxal 5'-phosphate serves as cofactor.

It carries out the reaction (1S,2R)-1-C-(indol-3-yl)glycerol 3-phosphate + L-serine = D-glyceraldehyde 3-phosphate + L-tryptophan + H2O. Its pathway is amino-acid biosynthesis; L-tryptophan biosynthesis; L-tryptophan from chorismate: step 5/5. The beta subunit is responsible for the synthesis of L-tryptophan from indole and L-serine. This chain is Tryptophan synthase beta chain, found in Blochmanniella floridana.